The sequence spans 435 residues: Methionine aminopeptidase 2 (435 aa).

Residues 1–87 (MAAQVADGVA…TQTKPPRVPV (87 aa)) form a disordered region. Over residues 10-19 (ADLKLDDTKS) the composition is skewed to basic and acidic residues. Positions 20-29 (KPTNGTTQNG) are enriched in polar residues. Positions 32-46 (EHEDSDDDNEGEEGA) are enriched in acidic residues. Residues 55–68 (KKKKKRKPRKKKKA) show a composition bias toward basic residues. H199 contributes to the substrate binding site. Residues D219, D230, and H299 each contribute to the a divalent metal cation site. Residue H307 participates in substrate binding. A divalent metal cation is bound by residues E332 and E427.

Belongs to the peptidase M24A family. Methionine aminopeptidase eukaryotic type 2 subfamily. Requires Co(2+) as cofactor. The cofactor is Zn(2+). It depends on Mn(2+) as a cofactor. Fe(2+) is required as a cofactor.

The protein resides in the cytoplasm. It catalyses the reaction Release of N-terminal amino acids, preferentially methionine, from peptides and arylamides.. Its function is as follows. Cotranslationally removes the N-terminal methionine from nascent proteins. The N-terminal methionine is often cleaved when the second residue in the primary sequence is small and uncharged (Met-Ala-, Cys, Gly, Pro, Ser, Thr, or Val). The polypeptide is Methionine aminopeptidase 2 (Phaeosphaeria nodorum (strain SN15 / ATCC MYA-4574 / FGSC 10173) (Glume blotch fungus)).